The following is a 357-amino-acid chain: Ribosomal RNA large subunit methyltransferase M (357 aa).

Residues Ser183, 216 to 219, Asp235, Asp255, and Asp271 contribute to the S-adenosyl-L-methionine site; that span reads APGG. Lys300 (proton acceptor) is an active-site residue.

This sequence belongs to the class I-like SAM-binding methyltransferase superfamily. RNA methyltransferase RlmE family. RlmM subfamily. Monomer.

Its subcellular location is the cytoplasm. It carries out the reaction cytidine(2498) in 23S rRNA + S-adenosyl-L-methionine = 2'-O-methylcytidine(2498) in 23S rRNA + S-adenosyl-L-homocysteine + H(+). Catalyzes the 2'-O-methylation at nucleotide C2498 in 23S rRNA. This chain is Ribosomal RNA large subunit methyltransferase M, found in Pseudomonas syringae pv. tomato (strain ATCC BAA-871 / DC3000).